An 88-amino-acid chain; its full sequence is Translation initiation factor IF-1 3 (88 aa).

Positions 1 to 72 (MAKEELLELD…TKGCINFRHK (72 aa)) constitute an S1-like domain.

It belongs to the IF-1 family. Component of the 30S ribosomal translation pre-initiation complex which assembles on the 30S ribosome in the order IF-2 and IF-3, IF-1 and N-formylmethionyl-tRNA(fMet); mRNA recruitment can occur at any time during PIC assembly.

Its subcellular location is the cytoplasm. Functionally, one of the essential components for the initiation of protein synthesis. Stabilizes the binding of IF-2 and IF-3 on the 30S subunit to which N-formylmethionyl-tRNA(fMet) subsequently binds. Helps modulate mRNA selection, yielding the 30S pre-initiation complex (PIC). Upon addition of the 50S ribosomal subunit IF-1, IF-2 and IF-3 are released leaving the mature 70S translation initiation complex. The sequence is that of Translation initiation factor IF-1 3 from Burkholderia orbicola (strain AU 1054).